We begin with the raw amino-acid sequence, 720 residues long: Fatty acid CoA ligase Acsl3 (720 aa).

The helical; Signal-anchor for type III membrane protein transmembrane segment at 21–41 threads the bilayer; sequence ILLYFIHFIISLYTILTYIPF. Over 42–720 the chain is Cytoplasmic; that stretch reads YFLCESKQEK…ADIERMYGRK (679 aa). S683 carries the post-translational modification Phosphoserine.

Belongs to the ATP-dependent AMP-binding enzyme family. Mg(2+) is required as a cofactor.

It localises to the mitochondrion outer membrane. The protein localises to the peroxisome membrane. The protein resides in the microsome membrane. Its subcellular location is the endoplasmic reticulum membrane. The enzyme catalyses a long-chain fatty acid + ATP + CoA = a long-chain fatty acyl-CoA + AMP + diphosphate. It catalyses the reaction (E)-hexadec-2-enoate + ATP + CoA = (2E)-hexadecenoyl-CoA + AMP + diphosphate. It carries out the reaction (5Z,8Z,11Z,14Z)-eicosatetraenoate + ATP + CoA = (5Z,8Z,11Z,14Z)-eicosatetraenoyl-CoA + AMP + diphosphate. The catalysed reaction is 15-hydroxy-(5Z,8Z,11Z,13E)-eicosatetraenoate + ATP + CoA = 15-hydroxy-(5Z,8Z,11Z,13E)-eicosatetraenoyl-CoA + AMP + diphosphate. The enzyme catalyses 12-hydroxy-(5Z,8Z,10E,14Z)-eicosatetraenoate + ATP + CoA = 12-hydroxy-(5Z,8Z,10E,14Z)-eicosatetraenoyl-CoA + AMP + diphosphate. It catalyses the reaction 5-hydroxy-(6E,8Z,11Z,14Z)-eicosatetraenoate + ATP + CoA = 5-hydroxy-(6E,8Z,11Z,14Z)-eicosatetraenoyl-CoA + AMP + diphosphate. It carries out the reaction 14,15-epoxy-(5Z,8Z,11Z)-eicosatrienoate + ATP + CoA = 14,15-epoxy-(5Z,8Z,11Z)-eicosatrienoyl-CoA + AMP + diphosphate. The catalysed reaction is 11,12-epoxy-(5Z,8Z,14Z)-eicosatrienoate + ATP + CoA = 11,12-epoxy-(5Z,8Z,14Z)-eicosatrienoyl-CoA + AMP + diphosphate. The enzyme catalyses a medium-chain fatty acid + ATP + CoA = a medium-chain fatty acyl-CoA + AMP + diphosphate. It catalyses the reaction hexadecanoate + ATP + CoA = hexadecanoyl-CoA + AMP + diphosphate. It carries out the reaction tetradecanoate + ATP + CoA = tetradecanoyl-CoA + AMP + diphosphate. The catalysed reaction is dodecanoate + ATP + CoA = dodecanoyl-CoA + AMP + diphosphate. The enzyme catalyses octadecanoate + ATP + CoA = octadecanoyl-CoA + AMP + diphosphate. It catalyses the reaction eicosanoate + ATP + CoA = eicosanoyl-CoA + AMP + diphosphate. It carries out the reaction (9Z)-octadecenoate + ATP + CoA = (9Z)-octadecenoyl-CoA + AMP + diphosphate. The catalysed reaction is (9Z)-hexadecenoate + ATP + CoA = (9Z)-hexadecenoyl-CoA + AMP + diphosphate. The enzyme catalyses (9Z,12Z)-octadecadienoate + ATP + CoA = (9Z,12Z)-octadecadienoyl-CoA + AMP + diphosphate. It catalyses the reaction (9Z,12Z,15Z)-octadecatrienoate + ATP + CoA = (9Z,12Z,15Z)-octadecatrienoyl-CoA + AMP + diphosphate. It carries out the reaction (4Z,7Z,10Z,13Z,16Z,19Z)-docosahexaenoate + ATP + CoA = (4Z,7Z,10Z,13Z,16Z,19Z)-docosahexaenoyl-CoA + AMP + diphosphate. The catalysed reaction is (5Z,8Z,11Z,14Z,17Z)-eicosapentaenoate + ATP + CoA = (5Z,8Z,11Z,14Z,17Z)-eicosapentaenoyl-CoA + AMP + diphosphate. The enzyme catalyses a fatty acid + ATP + CoA = a fatty acyl-CoA + AMP + diphosphate. In terms of biological role, acyl-CoA synthetases (ACSL) activates long-chain fatty acids for both synthesis of cellular lipids, and degradation via beta-oxidation. ACSL3 is required for the incorporation of fatty acids into phosphatidylcholine, the major phospholipid located on the surface of VLDL (very low density lipoproteins). Has mainly an anabolic role in energy metabolism. Mediates hepatic lipogenesis. Preferentially uses myristate, laurate, arachidonate and eicosapentaenoate as substrates. Both isoforms exhibit the same level of activity. This chain is Fatty acid CoA ligase Acsl3, found in Mus musculus (Mouse).